Reading from the N-terminus, the 379-residue chain is 23S rRNA (uracil(747)-C(5))-methyltransferase RlmC (379 aa).

Positions 3, 11, 14, and 87 each coordinate [4Fe-4S] cluster. Q212, F241, E262, and N309 together coordinate S-adenosyl-L-methionine. C336 functions as the Nucleophile in the catalytic mechanism.

This sequence belongs to the class I-like SAM-binding methyltransferase superfamily. RNA M5U methyltransferase family. RlmC subfamily.

It carries out the reaction uridine(747) in 23S rRNA + S-adenosyl-L-methionine = 5-methyluridine(747) in 23S rRNA + S-adenosyl-L-homocysteine + H(+). Functionally, catalyzes the formation of 5-methyl-uridine at position 747 (m5U747) in 23S rRNA. This Shewanella loihica (strain ATCC BAA-1088 / PV-4) protein is 23S rRNA (uracil(747)-C(5))-methyltransferase RlmC.